The sequence spans 274 residues: Ethanolamine ammonia-lyase small subunit (274 aa).

Positions 161, 182, and 211 each coordinate adenosylcob(III)alamin.

The protein belongs to the EutC family. In terms of assembly, the basic unit is a heterodimer which dimerizes to form tetramers. The heterotetramers trimerize; 6 large subunits form a core ring with 6 small subunits projecting outwards. The cofactor is adenosylcob(III)alamin.

It is found in the bacterial microcompartment. It catalyses the reaction ethanolamine = acetaldehyde + NH4(+). It functions in the pathway amine and polyamine degradation; ethanolamine degradation. Catalyzes the deamination of various vicinal amino-alcohols to oxo compounds. Allows this organism to utilize ethanolamine as the sole source of nitrogen and carbon in the presence of external vitamin B12. The polypeptide is Ethanolamine ammonia-lyase small subunit (Pseudomonas fluorescens (strain ATCC BAA-477 / NRRL B-23932 / Pf-5)).